Consider the following 619-residue polypeptide: MSAPNQNTLWARTFVSELAASGVDTVCISPGSRSTPLTVAFDRHDSIETFSHLDERSAAYFALGRARRTGSVTPVVCTSGTAAANYHPAVIEASQARVPLLVLTADRPPELHDSGANQTVDQTKLYGDAVRWFHDIGEPEPTARKLRSLRTTAARSIMTATDTPAGPVHLNFPFRKPLEPTPVPGDIPDDLSEESITGRDGAFVESTTGNRVLDENSVNRIAQSLSTSRGLIVVGPMTIPGVDPEAVAAFAHASGFPVLADPLSGIRYGGLTRTTPIIGGYDGYLTSELWDQWPDPDVVLRFGASPTSKPLRQYLESTSPTQYLVDPAGEWREATFTATDIVVADPTQLLWQLSRALNTPGSSTWRQRWIEADKAHTDVLANTDSSAHQSLAATNSDSSTDDIIENTDEEGSNESDRWFCEGRILSDVMTAAPDPATIFVSNSMPVRDLDRFGSPTTQNRTVLGNRGASGIDGIISTALGAGSALATTEHLIAITGDLAYYHDMNGLAALERCDVTATIVLINNDGGGIFHKLPIESYDPPFTTQFVTPHGLDFEPTEDIYDLSFARVRGTDRDGFHTAFTEATTTTGSHVIEVVTDSESSHRVREQLHDRVIKRILDN.

Positions 385–398 (SSAHQSLAATNSDS) are enriched in polar residues. A disordered region spans residues 385–415 (SSAHQSLAATNSDSSTDDIIENTDEEGSNES). The span at 399–413 (STDDIIENTDEEGSN) shows a compositional bias: acidic residues.

It belongs to the TPP enzyme family. MenD subfamily. Homodimer. Mg(2+) is required as a cofactor. It depends on Mn(2+) as a cofactor. The cofactor is thiamine diphosphate.

The enzyme catalyses isochorismate + 2-oxoglutarate + H(+) = 5-enolpyruvoyl-6-hydroxy-2-succinyl-cyclohex-3-ene-1-carboxylate + CO2. It functions in the pathway quinol/quinone metabolism; 1,4-dihydroxy-2-naphthoate biosynthesis; 1,4-dihydroxy-2-naphthoate from chorismate: step 2/7. The protein operates within quinol/quinone metabolism; menaquinone biosynthesis. In terms of biological role, catalyzes the thiamine diphosphate-dependent decarboxylation of 2-oxoglutarate and the subsequent addition of the resulting succinic semialdehyde-thiamine pyrophosphate anion to isochorismate to yield 2-succinyl-5-enolpyruvyl-6-hydroxy-3-cyclohexene-1-carboxylate (SEPHCHC). The protein is 2-succinyl-5-enolpyruvyl-6-hydroxy-3-cyclohexene-1-carboxylate synthase of Haloquadratum walsbyi (strain DSM 16790 / HBSQ001).